A 177-amino-acid chain; its full sequence is Large ribosomal subunit protein uL6 (177 aa).

Belongs to the universal ribosomal protein uL6 family. As to quaternary structure, part of the 50S ribosomal subunit.

This protein binds to the 23S rRNA, and is important in its secondary structure. It is located near the subunit interface in the base of the L7/L12 stalk, and near the tRNA binding site of the peptidyltransferase center. The protein is Large ribosomal subunit protein uL6 of Methylorubrum extorquens (strain CM4 / NCIMB 13688) (Methylobacterium extorquens).